A 338-amino-acid polypeptide reads, in one-letter code: Protein WVD2-like 2 (338 aa).

Residues 1–14 (MGRELVDKHMDKKA) show a composition bias toward basic and acidic residues. The segment at 1–150 (MGRELVDKHM…SFSVASSSAT (150 aa)) is disordered. Composition is skewed to polar residues over residues 15 to 37 (NSLT…STNE) and 59 to 69 (QGITETPGSHK). Positions 100-115 (NNSLGNGASHNSSSAS) are enriched in low complexity. Over residues 128 to 138 (RIPDHKMHHDE) the composition is skewed to basic and acidic residues. The stretch at 177–214 (REFYQKLEEKQKALEAEKRENEKRLKEEQEAVTKQLRK) forms a coiled coil. Residues 222-338 (PVPSFYQEGP…GENGVGVVEE (117 aa)) are disordered. Residues 288–300 (TNSVPRTPNSSSK) show a composition bias toward polar residues.

This sequence belongs to the TPX2 family. Expressed in seedlings.

The protein localises to the cytoplasm. It localises to the cytoskeleton. In terms of biological role, microtubule-associated protein (MAP) that regulates the orientation of interphase cortical microtubules. This Arabidopsis thaliana (Mouse-ear cress) protein is Protein WVD2-like 2.